We begin with the raw amino-acid sequence, 126 residues long: UPF0344 protein ABC2900 (126 aa).

Helical transmembrane passes span A16 to F36, A43 to A63, L66 to I86, and G104 to I124.

The protein belongs to the UPF0344 family.

Its subcellular location is the cell membrane. The sequence is that of UPF0344 protein ABC2900 from Shouchella clausii (strain KSM-K16) (Alkalihalobacillus clausii).